We begin with the raw amino-acid sequence, 300 residues long: 33 kDa chaperonin (300 aa).

Intrachain disulfides connect Cys235–Cys237 and Cys269–Cys272.

It belongs to the HSP33 family. Under oxidizing conditions two disulfide bonds are formed involving the reactive cysteines. Under reducing conditions zinc is bound to the reactive cysteines and the protein is inactive.

The protein resides in the cytoplasm. In terms of biological role, redox regulated molecular chaperone. Protects both thermally unfolding and oxidatively damaged proteins from irreversible aggregation. Plays an important role in the bacterial defense system toward oxidative stress. The protein is 33 kDa chaperonin of Pseudomonas savastanoi pv. phaseolicola (strain 1448A / Race 6) (Pseudomonas syringae pv. phaseolicola (strain 1448A / Race 6)).